The sequence spans 352 residues: DNA polymerase IV (352 aa).

Residues 4-185 (IIHVDMDCFY…LPLEKIPGVG (182 aa)) form the UmuC domain. Mg(2+) contacts are provided by Asp-8 and Asp-103. Glu-104 is an active-site residue.

It belongs to the DNA polymerase type-Y family. Monomer. The cofactor is Mg(2+).

The protein resides in the cytoplasm. The catalysed reaction is DNA(n) + a 2'-deoxyribonucleoside 5'-triphosphate = DNA(n+1) + diphosphate. Poorly processive, error-prone DNA polymerase involved in untargeted mutagenesis. Copies undamaged DNA at stalled replication forks, which arise in vivo from mismatched or misaligned primer ends. These misaligned primers can be extended by PolIV. Exhibits no 3'-5' exonuclease (proofreading) activity. May be involved in translesional synthesis, in conjunction with the beta clamp from PolIII. This chain is DNA polymerase IV, found in Pectobacterium atrosepticum (strain SCRI 1043 / ATCC BAA-672) (Erwinia carotovora subsp. atroseptica).